The primary structure comprises 171 residues: Small ribosomal subunit protein uS5 (171 aa).

An S5 DRBM domain is found at 15–78 (YEEKVVKIKR…EKAKKQLIRI (64 aa)).

Belongs to the universal ribosomal protein uS5 family. As to quaternary structure, part of the 30S ribosomal subunit. Contacts proteins S4 and S8.

In terms of biological role, with S4 and S12 plays an important role in translational accuracy. Functionally, located at the back of the 30S subunit body where it stabilizes the conformation of the head with respect to the body. The polypeptide is Small ribosomal subunit protein uS5 (Phytoplasma australiense).